The primary structure comprises 677 residues: Transketolase 1 (677 aa).

Substrate is bound at residue histidine 27. Thiamine diphosphate-binding positions include histidine 66 and 114 to 116 (GPL). Residue aspartate 155 coordinates Mg(2+). Residues glycine 156 and asparagine 185 each coordinate thiamine diphosphate. Residues asparagine 185 and isoleucine 187 each coordinate Mg(2+). Substrate contacts are provided by histidine 261, arginine 356, and serine 383. Histidine 261 lines the thiamine diphosphate pocket. Residues glutamate 415 and phenylalanine 442 each contribute to the thiamine diphosphate site. Residue glutamate 415 is the Proton donor of the active site. Residues histidine 466, aspartate 474, and arginine 525 each coordinate substrate.

The protein belongs to the transketolase family. As to quaternary structure, homodimer. It depends on Mg(2+) as a cofactor. Requires Ca(2+) as cofactor. Mn(2+) is required as a cofactor. The cofactor is Co(2+). Thiamine diphosphate serves as cofactor.

It catalyses the reaction D-sedoheptulose 7-phosphate + D-glyceraldehyde 3-phosphate = aldehydo-D-ribose 5-phosphate + D-xylulose 5-phosphate. Functionally, catalyzes the transfer of a two-carbon ketol group from a ketose donor to an aldose acceptor, via a covalent intermediate with the cofactor thiamine pyrophosphate. The protein is Transketolase 1 (TKT1) of Candida albicans (Yeast).